Reading from the N-terminus, the 348-residue chain is Uroporphyrinogen decarboxylase (348 aa).

Substrate contacts are provided by residues 24 to 28, Asp-73, Tyr-150, Ser-205, and His-324; that span reads RQAGR.

It belongs to the uroporphyrinogen decarboxylase family. As to quaternary structure, homodimer.

The protein localises to the cytoplasm. The catalysed reaction is uroporphyrinogen III + 4 H(+) = coproporphyrinogen III + 4 CO2. It participates in porphyrin-containing compound metabolism; protoporphyrin-IX biosynthesis; coproporphyrinogen-III from 5-aminolevulinate: step 4/4. In terms of biological role, catalyzes the decarboxylation of four acetate groups of uroporphyrinogen-III to yield coproporphyrinogen-III. In Roseiflexus sp. (strain RS-1), this protein is Uroporphyrinogen decarboxylase.